The primary structure comprises 304 residues: Taste receptor type 2 member 4 (304 aa).

At 1-10 (MLWELYAFVF) the chain is on the extracellular side. Residues 11-31 (AASVVFNFVGIVANLFIIVII) form a helical membrane-spanning segment. The Cytoplasmic portion of the chain corresponds to 32–46 (SKTWVKSHKISSSDK). Residues 47–67 (ILFSLAITRFLTLGLFLLNTV) traverse the membrane as a helical segment. At 68 to 80 (YIATNTGRSVYFS) the chain is on the extracellular side. Residues 81–101 (TFFLLCWKFLDSNSLWLVTFL) form a helical membrane-spanning segment. The Cytoplasmic segment spans residues 102 to 128 (NCLYCVKITHFQHPVFLLLKRTVSMKT). Residues 129–149 (TSLLLACLLISAFTTLLYFVL) traverse the membrane as a helical segment. Over 150–171 (TQISRFPEHIIGRNDTLFDVSD) the chain is Extracellular. Residue asparagine 163 is glycosylated (N-linked (GlcNAc...) asparagine). The helical transmembrane segment at 172-192 (GILTLAASLILSSLLQFLLNV) threads the bilayer. Residues 193 to 229 (TFASLLIHSLRRHVQKMQRNRSSFWNPQTEAHVGAMR) are Cytoplasmic-facing. The helical transmembrane segment at 230–250 (LMICFLVLYIPYSIAALLYFP) threads the bilayer. The Extracellular portion of the chain corresponds to 251-260 (SYMRKNLRAQ). The chain crosses the membrane as a helical span at residues 261–281 (AACMIITAAYPPGHSILLIIT). At 282–304 (HHKLKAKAKKICCFYKLRDFVSN) the chain is on the cytoplasmic side.

The protein belongs to the G-protein coupled receptor T2R family. Expressed in tongue, stomach and duodenum.

The protein localises to the membrane. Its subcellular location is the cell projection. It is found in the cilium membrane. Functionally, gustducin-coupled receptor implicated in the perception of bitter compounds in the oral cavity and the gastrointestinal tract. Signals through PLCB2 and the calcium-regulated cation channel TRPM5. In airway epithelial cells, binding of denatonium increases the intracellular calcium ion concentration and stimulates ciliary beat frequency. In Rattus norvegicus (Rat), this protein is Taste receptor type 2 member 4.